A 444-amino-acid polypeptide reads, in one-letter code: MSSVKRSLNQEIISQFHYSAAEGDIAKLTAILSHSPSLLNETSENGWSALICDRSIVNKSRQTALDIAKFWGYKHIANLLANAKGGKKPWFLTNEVEECENYFSKTLLDRKSEKRNNSDWLLAKESHPATVYILFSDLNPLVTLGGNKESFQQPEVRLCQLNYTDIKDYLAQPEKITLIFLGVELEMKKEFFNYAGEISKEEEDGLVAWFALGIDTVAAEEFKQRHENCYFLHPPMPALLQLKEKEAGVVAQARSVLAWHSRYKFCPTCGNATKIEEGGYKRVCLKEDCPSLHGVHNTSYPRVDPVVIMQVIHPDGTKCLLGRQKRFPPGMFTCLAGFIEPGETIEDAVRREVEEESGVKVGHVQYVSCQPWPMPSSLMIGCLAVAVSTEIKVDKNEIEDARWFTREQVVDVLTKGKQQAFFVPPSRAIAHQLIKHWIGMNPNL.

ANK repeat units lie at residues 11–40 (EIIS…SLLN) and 60–80 (SRQT…ANLL). An N6-succinyllysine modification is found at Lys-167. Residues Cys-266 and Cys-269 each coordinate Zn(2+). At Lys-274 the chain carries N6-succinyllysine. Zn(2+) contacts are provided by Cys-284 and Cys-289. Substrate-binding positions include Tyr-300, 336 to 338 (AGF), Glu-352, Glu-356, and Glu-397. In terms of domain architecture, Nudix hydrolase spans 301-435 (PRVDPVVIMQ…SRAIAHQLIK (135 aa)). The Mg(2+) site is built by Ala-336, Glu-352, Glu-356, and Glu-397. The short motif at 337–358 (GFIEPGETIEDAVRREVEEESG) is the Nudix box element. Positions 442-444 (PNL) match the Microbody targeting signal motif.

Belongs to the Nudix hydrolase family. NudC subfamily. As to quaternary structure, homodimer. Homodimerization is essential for its catalytic activity and protein stability. Interacts (via ANK repeats) with BLMH. It depends on Mg(2+) as a cofactor. The cofactor is Zn(2+).

It is found in the cytoplasm. Its subcellular location is the peroxisome. The protein resides in the cytoplasmic granule. It catalyses the reaction a 5'-end NAD(+)-phospho-ribonucleoside in mRNA + H2O = a 5'-end phospho-adenosine-phospho-ribonucleoside in mRNA + beta-nicotinamide D-ribonucleotide + 2 H(+). The enzyme catalyses NAD(+) + H2O = beta-nicotinamide D-ribonucleotide + AMP + 2 H(+). It carries out the reaction NADH + H2O = reduced beta-nicotinamide D-ribonucleotide + AMP + 2 H(+). The catalysed reaction is NADPH + H2O = reduced beta-nicotinamide D-ribonucleotide + adenosine 2',5'-bisphosphate + 2 H(+). MRNA decapping enzyme that specifically removes the nicotinamide adenine dinucleotide (NAD) cap from a subset of mRNAs by hydrolyzing the diphosphate linkage to produce nicotinamide mononucleotide (NMN) and 5' monophosphate mRNA. The NAD-cap is present at the 5'-end of some RNAs; in contrast to the canonical N7 methylguanosine (m7G) cap, the NAD cap promotes mRNA decay. Preferentially acts on NAD-capped transcripts in response to nutrient stress. Also acts on free nicotinamide adenine dinucleotide molecules: hydrolyzes NAD(H) into NMN(H) and AMP, and NADPH into NMNH and 2',5'-ADP. May act to regulate the concentration of peroxisomal nicotinamide nucleotide cofactors required for oxidative metabolism in this organelle. Regulates the levels of circadian clock components PER1, PER2, PER3 and CRY2 in the liver. This Bos taurus (Bovine) protein is NAD-capped RNA hydrolase NUDT12.